The following is a 426-amino-acid chain: Glutamate-1-semialdehyde 2,1-aminomutase (426 aa).

Lys-265 is subject to N6-(pyridoxal phosphate)lysine.

This sequence belongs to the class-III pyridoxal-phosphate-dependent aminotransferase family. HemL subfamily. Homodimer. The cofactor is pyridoxal 5'-phosphate.

Its subcellular location is the cytoplasm. The enzyme catalyses (S)-4-amino-5-oxopentanoate = 5-aminolevulinate. The protein operates within porphyrin-containing compound metabolism; protoporphyrin-IX biosynthesis; 5-aminolevulinate from L-glutamyl-tRNA(Glu): step 2/2. In Salmonella arizonae (strain ATCC BAA-731 / CDC346-86 / RSK2980), this protein is Glutamate-1-semialdehyde 2,1-aminomutase.